Consider the following 99-residue polypeptide: HssA/B-like protein 42 (99 aa).

The disordered stretch occupies residues 1–29 (MTLFSSISSMSTSMSGSKSSISSFGSGTS).

This sequence belongs to the hssA/B family.

In Dictyostelium discoideum (Social amoeba), this protein is HssA/B-like protein 42 (hssl42).